The sequence spans 176 residues: Large ribosomal subunit protein uL6 (176 aa).

Over residues 151 to 170 the composition is skewed to basic and acidic residues; sequence RPPEPYKGKGVRYADEQVRR. The interval 151-176 is disordered; the sequence is RPPEPYKGKGVRYADEQVRRKEAKKK.

Belongs to the universal ribosomal protein uL6 family. As to quaternary structure, part of the 50S ribosomal subunit.

Its function is as follows. This protein binds to the 23S rRNA, and is important in its secondary structure. It is located near the subunit interface in the base of the L7/L12 stalk, and near the tRNA binding site of the peptidyltransferase center. The protein is Large ribosomal subunit protein uL6 of Shewanella pealeana (strain ATCC 700345 / ANG-SQ1).